The sequence spans 102 residues: Large ribosomal subunit protein bL21 (102 aa).

Belongs to the bacterial ribosomal protein bL21 family. Part of the 50S ribosomal subunit. Contacts protein L20.

Its function is as follows. This protein binds to 23S rRNA in the presence of protein L20. In Ehrlichia ruminantium (strain Welgevonden), this protein is Large ribosomal subunit protein bL21.